The sequence spans 221 residues: Oxaloacetate tautomerase FAHD1, mitochondrial (221 aa).

The N-terminal 24 residues, 1–24, are a transit peptide targeting the mitochondrion; sequence MAASRPLSRFWEWGKNIVCVGRNY. Arginine 22 is a binding site for oxalate. Phosphoserine is present on serine 37. Mg(2+)-binding residues include glutamate 68, glutamate 70, and aspartate 99. Position 110 is an N6-acetyllysine (lysine 110). Lysine 112 carries the N6-succinyllysine modification. 2 residues coordinate oxalate: lysine 120 and threonine 189.

The protein belongs to the FAH family. In terms of assembly, homodimer. It depends on Mg(2+) as a cofactor. Requires Mn(2+) as cofactor. Ubiquitous (at protein level).

The protein resides in the mitochondrion. The protein localises to the cytoplasm. Its subcellular location is the cytosol. It carries out the reaction oxaloacetate = enol-oxaloacetate. It catalyses the reaction oxaloacetate + H(+) = pyruvate + CO2. The catalysed reaction is a 3-acylpyruvate + H2O = a carboxylate + pyruvate + H(+). The enzyme catalyses acetylpyruvate + H2O = acetate + pyruvate + H(+). It carries out the reaction 3-fumarylpyruvate + H2O = fumarate + pyruvate + H(+). Its activity is regulated as follows. Oxaloacetate decarboxylation is competitively inhibited by oxalate. Tautomerase that converts enol-oxaloacetate, a strong inhibitor of succinate dehydrogenase, to the physiological keto form of oxaloacetate. It is thereby required to maximize aerobic respiration efficiency by preventing succinate dehydrogenase inhibition. Also acts as a weak oxaloacetate decarboxylase (ODx), catalyzing the decarboxylation of oxaloacetate (OAA) to pyruvate and CO(2), and as such is likely a regulatory enzyme in the TCA cycle. Also displays acylpyruvase activity, being able to hydrolyze acetylpyruvate and fumarylpyruvate in vitro. Exhibits only a weak hydrolase activity on methylacetopyruvate and acetylacetone, and no activity toward acetoacetyl-CoA. This Homo sapiens (Human) protein is Oxaloacetate tautomerase FAHD1, mitochondrial.